The chain runs to 329 residues: Glycerol-3-phosphate dehydrogenase [NAD(P)+] (329 aa).

The NADPH site is built by tryptophan 15, histidine 35, and lysine 107. Lysine 107, glycine 135, and serine 137 together coordinate sn-glycerol 3-phosphate. Alanine 139 contacts NADPH. Sn-glycerol 3-phosphate contacts are provided by lysine 190, aspartate 243, serine 253, arginine 254, and asparagine 255. The active-site Proton acceptor is lysine 190. Arginine 254 is a binding site for NADPH. Residues leucine 276 and glutamate 278 each coordinate NADPH.

This sequence belongs to the NAD-dependent glycerol-3-phosphate dehydrogenase family.

The protein resides in the cytoplasm. It catalyses the reaction sn-glycerol 3-phosphate + NAD(+) = dihydroxyacetone phosphate + NADH + H(+). It carries out the reaction sn-glycerol 3-phosphate + NADP(+) = dihydroxyacetone phosphate + NADPH + H(+). Its pathway is membrane lipid metabolism; glycerophospholipid metabolism. Catalyzes the reduction of the glycolytic intermediate dihydroxyacetone phosphate (DHAP) to sn-glycerol 3-phosphate (G3P), the key precursor for phospholipid synthesis. This is Glycerol-3-phosphate dehydrogenase [NAD(P)+] from Rhodopseudomonas palustris (strain HaA2).